Reading from the N-terminus, the 342-residue chain is Holliday junction branch migration complex subunit RuvB (342 aa).

The tract at residues 1–179 (MTNILSPEKS…FGIPMRLNFY (179 aa)) is large ATPase domain (RuvB-L). Residues isoleucine 18, arginine 19, glycine 60, lysine 63, threonine 64, threonine 65, 126-128 (EDF), arginine 169, tyrosine 179, and arginine 216 contribute to the ATP site. A Mg(2+)-binding site is contributed by threonine 64. A small ATPAse domain (RuvB-S) region spans residues 180–250 (NTEELKQVLN…ICDFGLKRLT (71 aa)). The segment at 253 to 342 (SIGLDSNDYR…HQFNILNENE (90 aa)) is head domain (RuvB-H). DNA is bound by residues arginine 289, arginine 308, and arginine 313.

Belongs to the RuvB family. As to quaternary structure, homohexamer. Forms an RuvA(8)-RuvB(12)-Holliday junction (HJ) complex. HJ DNA is sandwiched between 2 RuvA tetramers; dsDNA enters through RuvA and exits via RuvB. An RuvB hexamer assembles on each DNA strand where it exits the tetramer. Each RuvB hexamer is contacted by two RuvA subunits (via domain III) on 2 adjacent RuvB subunits; this complex drives branch migration. In the full resolvosome a probable DNA-RuvA(4)-RuvB(12)-RuvC(2) complex forms which resolves the HJ.

The protein localises to the cytoplasm. The catalysed reaction is ATP + H2O = ADP + phosphate + H(+). The RuvA-RuvB-RuvC complex processes Holliday junction (HJ) DNA during genetic recombination and DNA repair, while the RuvA-RuvB complex plays an important role in the rescue of blocked DNA replication forks via replication fork reversal (RFR). RuvA specifically binds to HJ cruciform DNA, conferring on it an open structure. The RuvB hexamer acts as an ATP-dependent pump, pulling dsDNA into and through the RuvAB complex. RuvB forms 2 homohexamers on either side of HJ DNA bound by 1 or 2 RuvA tetramers; 4 subunits per hexamer contact DNA at a time. Coordinated motions by a converter formed by DNA-disengaged RuvB subunits stimulates ATP hydrolysis and nucleotide exchange. Immobilization of the converter enables RuvB to convert the ATP-contained energy into a lever motion, pulling 2 nucleotides of DNA out of the RuvA tetramer per ATP hydrolyzed, thus driving DNA branch migration. The RuvB motors rotate together with the DNA substrate, which together with the progressing nucleotide cycle form the mechanistic basis for DNA recombination by continuous HJ branch migration. Branch migration allows RuvC to scan DNA until it finds its consensus sequence, where it cleaves and resolves cruciform DNA. The sequence is that of Holliday junction branch migration complex subunit RuvB from Rickettsia typhi (strain ATCC VR-144 / Wilmington).